Reading from the N-terminus, the 259-residue chain is Receptor-recognizing protein gp38 (259 aa).

10 consecutive short sequence motifs (GRM) follow at residues 113 to 122, 124 to 131, 151 to 161, 164 to 177, 180 to 186, 189 to 195, 197 to 204, 210 to 216, 219 to 224, and 227 to 239; these read GRGGNGWAAC, IGASDGGV, GGGGGGGGYSQ, NWAG…GGGR, GLGGNNG, WPGGNAS, TSPGAGGN, YAGGGGE, QPGQYA, and GASY…SPGA. The segment at 213-243 is disordered; the sequence is GGGEVGQPGQYANPGASYSTPPTSPGAAVAG.

It belongs to the receptor-recognizing protein gp38 family.

Its subcellular location is the virion. In terms of biological role, receptor binding protein (RBP) that is at the tip of the long tail fibers and serves as the phage recognition site for the attachment host receptor OmpC. The chain is Receptor-recognizing protein gp38 (38) from Escherichia phage AR1 (Bacteriophage AR1).